The primary structure comprises 480 residues: Proline--tRNA ligase (480 aa).

Belongs to the class-II aminoacyl-tRNA synthetase family. ProS type 3 subfamily. As to quaternary structure, homodimer.

It is found in the cytoplasm. It catalyses the reaction tRNA(Pro) + L-proline + ATP = L-prolyl-tRNA(Pro) + AMP + diphosphate. Functionally, catalyzes the attachment of proline to tRNA(Pro) in a two-step reaction: proline is first activated by ATP to form Pro-AMP and then transferred to the acceptor end of tRNA(Pro). The chain is Proline--tRNA ligase from Chloroflexus aggregans (strain MD-66 / DSM 9485).